A 237-amino-acid polypeptide reads, in one-letter code: tRNA (guanine-N(7)-)-methyltransferase (237 aa).

Positions 67, 92, 119, and 141 each coordinate S-adenosyl-L-methionine. Asp141 is an active-site residue. Residues Lys145, Asp177, and 214–217 (TRYE) each bind substrate.

This sequence belongs to the class I-like SAM-binding methyltransferase superfamily. TrmB family.

It carries out the reaction guanosine(46) in tRNA + S-adenosyl-L-methionine = N(7)-methylguanosine(46) in tRNA + S-adenosyl-L-homocysteine. The protein operates within tRNA modification; N(7)-methylguanine-tRNA biosynthesis. In terms of biological role, catalyzes the formation of N(7)-methylguanine at position 46 (m7G46) in tRNA. The polypeptide is tRNA (guanine-N(7)-)-methyltransferase (Ruegeria pomeroyi (strain ATCC 700808 / DSM 15171 / DSS-3) (Silicibacter pomeroyi)).